The following is a 633-amino-acid chain: Early transcription factor 70 kDa subunit (633 aa).

A Helicase ATP-binding domain is found at 32 to 185; it reads RTILDHNESV…SNIISIMSDE (154 aa). Position 45–52 (45–52) interacts with ATP; sequence HIMGSGKT. Positions 135–138 match the DEXH box motif; that stretch reads DEAH. The Helicase C-terminal domain maps to 326-505; the sequence is KFKYFIDTIG…TLPFDIKKLL (180 aa).

It belongs to the helicase family. VETF subfamily. As to quaternary structure, heterodimer of a 70 kDa and a 82 kDa subunit. Part of the early transcription complex composed of ETF, RAP94, and the DNA-directed RNA polymerase.

The protein localises to the virion. Functionally, acts with RNA polymerase to initiate transcription from early gene promoters. Is recruited by the RPO-associated protein of 94 kDa (RAP94) to form the early transcription complex, which also contains the core RNA polymerase. ETF heterodimer binds to early gene promoters. The polypeptide is Early transcription factor 70 kDa subunit (VETFS) (Vertebrata (FPV)).